We begin with the raw amino-acid sequence, 604 residues long: Ribosome-inactivating protein PMRIPm (604 aa).

The N-terminal stretch at M1 to Q43 is a signal peptide. E211 is an active-site residue. 3 disulfide bridges follow: C301/C332, C348/C367, and C392/C409. Ricin B-type lectin domains are found at residues G335–G463 and V466–V598. A 1-alpha repeat occupies A345–S387. A 1-beta repeat occupies L389 to N429. The 1-gamma repeat unit spans residues S432–D465. One copy of the 2-alpha repeat lies at Q477–A521. C480 and C502 are joined by a disulfide. Residue N490 is glycosylated (N-linked (GlcNAc...) asparagine). The stretch at R525–N563 is one 2-beta repeat. The stretch at A566–T599 is one 2-gamma repeat.

Belongs to the ribosome-inactivating protein family. Type 2 RIP subfamily. As to quaternary structure, disulfide-linked dimer of A and B chains. The precursor is processed in two chains, A and B, that are linked by a disulfide bond. Post-translationally, glycosylated. In terms of processing, the N-terminus is blocked. Expressed in rhizome and abundantly in leaves (at protein level).

The enzyme catalyses Endohydrolysis of the N-glycosidic bond at one specific adenosine on the 28S rRNA.. Its activity is regulated as follows. Strongly inhibited by asialofetuin and asialomucin. In terms of biological role, gal/GalNAc-specific agglutinin. Behaves as a type-2 ribosome-inactivating protein. Inhibits mammalian ribosomes. The A chain is responsible for inhibiting protein synthesis through the catalytic inactivation of 60S ribosomal subunits by removing adenine from position 4,324 of 28S rRNA. The B chain binds to cell receptors and probably facilitates the entry into the cell of the A chain; B chains are also responsible for cell agglutination (lectin activity). Involved in plant defense against insects. Has very low cytotoxic activity against the human tumor cell line Molt4, but higher against CEM. This chain is Ribosome-inactivating protein PMRIPm, found in Polygonatum multiflorum (Solomon's seal).